We begin with the raw amino-acid sequence, 416 residues long: Advanced glycosylation end product-specific receptor (416 aa).

The N-terminal stretch at 1-22 is a signal peptide; sequence MAAGAVVGAWMLVLSLGGTVTG. The region spanning 23-115 is the Ig-like V-type domain; it reads DQNITARIGK…KETKSNYRVR (93 aa). The Extracellular portion of the chain corresponds to 23-352; sequence DQNITARIGK…VEGPGLETLA (330 aa). N-linked (GlcNAc...) asparagine glycans are attached at residues N25 and N80. 2 disulfide bridges follow: C38-C98 and C143-C207. 2 consecutive Ig-like C2-type domains span residues 123 to 220 and 238 to 327; these read PEIV…RALH and PNVD…RAVS. The chain crosses the membrane as a helical span at residues 353–373; sequence LTLGILGGLGTVALLIGVIVW. Residues 374 to 416 lie on the Cytoplasmic side of the membrane; sequence HRRRQRKGQERKVPENQEEEEEERAELNQPEEPEAAESSTGGP. Residues 377–416 form a disordered region; sequence RQRKGQERKVPENQEEEEEERAELNQPEEPEAAESSTGGP. Positions 389 to 408 are enriched in acidic residues; the sequence is NQEEEEEERAELNQPEEPEA.

As to quaternary structure, constitutive homodimer; disulfide-linked. Forms homooligomers. Interacts with S100A1 and APP. Interacts with S100B, S100A12 and S100A14. Interacts with TIRAP. Interacts with HMGB1. Interacts with LGP2; this interaction plays an important role in AGER-mediated pro-inflammatory responses and cytokine release. Interacts with double-strand break repair protein MRE11 which is a core component of the MRN complex; the interaction enhances MRE11 endonuclease activity and promotes DNA repair. Interacts with the MCM2-7 complex via interaction with complex member MCM2; the interaction is increased following DNA replication stress and stabilizes the MCM2-7 complex at replication forks. Phosphorylated on its cytoplasmic domain by PKCzeta/PRKCZ upon ligand binding. Phosphorylated by ATM following DNA damage. Post-translationally, targeted by the ubiquitin E3 ligase subunit FBXO10 to mediate its ubiquitination and degradation. In terms of tissue distribution, endothelial cells.

The protein localises to the cell membrane. Its subcellular location is the cell projection. The protein resides in the phagocytic cup. It localises to the early endosome. It is found in the nucleus. Cell surface pattern recognition receptor that senses endogenous stress signals with a broad ligand repertoire including advanced glycation end products, S100 proteins, high-mobility group box 1 protein/HMGB1, amyloid beta/APP oligomers, nucleic acids, histones, phospholipids and glycosaminoglycans. Advanced glycosylation end products are nonenzymatically glycosylated proteins which accumulate in vascular tissue in aging and at an accelerated rate in diabetes. These ligands accumulate at inflammatory sites during the pathogenesis of various diseases including diabetes, vascular complications, neurodegenerative disorders and cancers, and RAGE transduces their binding into pro-inflammatory responses. Upon ligand binding, uses TIRAP and MYD88 as adapters to transduce the signal ultimately leading to the induction of inflammatory cytokines IL6, IL8 and TNFalpha through activation of NF-kappa-B. Interaction with S100A12 on endothelium, mononuclear phagocytes, and lymphocytes triggers cellular activation, with generation of key pro-inflammatory mediators. Interaction with S100B after myocardial infarction may play a role in myocyte apoptosis by activating ERK1/2 and p53/TP53 signaling. Contributes to the translocation of amyloid-beta peptide (ABPP) across the cell membrane from the extracellular to the intracellular space in cortical neurons. ABPP-initiated RAGE signaling, especially stimulation of p38 mitogen-activated protein kinase (MAPK), has the capacity to drive a transport system delivering ABPP as a complex with RAGE to the intraneuronal space. Participates in endothelial albumin transcytosis together with HMGB1 through the RAGE/SRC/Caveolin-1 pathway, leading to endothelial hyperpermeability. Mediates the loading of HMGB1 in extracellular vesicles (EVs) that shuttle HMGB1 to hepatocytes by transferrin-mediated endocytosis and subsequently promote hepatocyte pyroptosis by activating the NLRP3 inflammasome. Binds to DNA and promotes extracellular hypomethylated DNA (CpG DNA) uptake by cells via the endosomal route to activate inflammatory responses. Mediates phagocytosis by non-professional phagocytes (NPP) and this is enhanced by binding to ligands including RNA, DNA, HMGB1 and histones. Promotes NPP-mediated phagocytosis of Saccharomyces cerevisiae spores by binding to RNA attached to the spore wall. Also promotes NPP-mediated phagocytosis of apoptotic cells. Following DNA damage, recruited to DNA double-strand break sites where it colocalizes with the MRN repair complex via interaction with double-strand break repair protein MRE11. Enhances the endonuclease activity of MRE11, promoting the end resection of damaged DNA. Promotes DNA damage repair in trophoblasts which enhances trophoblast invasion and contributes to placental development and maintenance. Protects cells from DNA replication stress by localizing to damaged replication forks where it stabilizes the MCM2-7 complex and promotes faithful progression of the replication fork. This is Advanced glycosylation end product-specific receptor (AGER) from Bos taurus (Bovine).